The sequence spans 440 residues: UPF0489 protein C5orf22 homolog (440 aa).

The disordered stretch occupies residues 187 to 207 (VEGSSSGIQSSTSESSEDGLM). Low complexity predominate over residues 188–200 (EGSSSGIQSSTSE).

The protein belongs to the UPF0489 family.

This Xenopus tropicalis (Western clawed frog) protein is UPF0489 protein C5orf22 homolog.